The sequence spans 356 residues: S-adenosylmethionine:tRNA ribosyltransferase-isomerase (356 aa).

This sequence belongs to the QueA family. In terms of assembly, monomer.

It localises to the cytoplasm. It catalyses the reaction 7-aminomethyl-7-carbaguanosine(34) in tRNA + S-adenosyl-L-methionine = epoxyqueuosine(34) in tRNA + adenine + L-methionine + 2 H(+). It participates in tRNA modification; tRNA-queuosine biosynthesis. Functionally, transfers and isomerizes the ribose moiety from AdoMet to the 7-aminomethyl group of 7-deazaguanine (preQ1-tRNA) to give epoxyqueuosine (oQ-tRNA). In Enterobacter sp. (strain 638), this protein is S-adenosylmethionine:tRNA ribosyltransferase-isomerase.